The chain runs to 206 residues: MILSDKDIFNYVTSKRVLIEPFNSKFVGPCSYDVTLGSEFIKYNEDVYDVKKTLNHSKFKIENSVMVCPLNHHLDETIIKNYKEKYNVDCVVSGGLLGTTNEYVELPNDVCAQYQGRSSFGRVFLQTHQTAGWIDSGFKGKITLEIVAYDKPVILYKNQRVGQLIFSKTLSPADIGYSDRKCSKYAGQTSVMASLIKKDFETNEEE.

DCTP-binding positions include 117–122 (RSSFGR), Asp135, 143–145 (TLE), Gln163, Tyr177, Lys184, and Gln188. Glu145 acts as the Proton donor/acceptor in catalysis.

This sequence belongs to the dCTP deaminase family. In terms of assembly, homotrimer.

It catalyses the reaction dCTP + 2 H2O = dUMP + NH4(+) + diphosphate. The protein operates within pyrimidine metabolism; dUMP biosynthesis; dUMP from dCTP: step 1/1. In terms of biological role, bifunctional enzyme that catalyzes both the deamination of dCTP to dUTP and the hydrolysis of dUTP to dUMP without releasing the toxic dUTP intermediate. In Methanococcus maripaludis (strain DSM 14266 / JCM 13030 / NBRC 101832 / S2 / LL), this protein is dCTP deaminase, dUMP-forming.